A 534-amino-acid polypeptide reads, in one-letter code: 26S proteasome non-ATPase regulatory subunit 3 (534 aa).

The span at 1–16 (MKQEGSARRRGADKAK) shows a compositional bias: basic and acidic residues. The segment at 1-69 (MKQEGSARRR…AEHSQRELDT (69 aa)) is disordered. The segment covering 17 to 32 (PPPGGGEQEPPPPPAP) has biased composition (pro residues). Residue lysine 38 forms a Glycyl lysine isopeptide (Lys-Gly) (interchain with G-Cter in SUMO1); alternate linkage. A Glycyl lysine isopeptide (Lys-Gly) (interchain with G-Cter in SUMO2); alternate cross-link involves residue lysine 38. Residues 286-465 (ARYLYYTGRI…GYVQSKEMID (180 aa)) enclose the PCI domain. Phosphoserine is present on residues serine 418 and serine 430. Residues 500-534 (SYNKDLESAEERREREQQDLEFAKEMAEDDDDSFP) form a disordered region. The segment covering 501–525 (YNKDLESAEERREREQQDLEFAKEM) has biased composition (basic and acidic residues).

This sequence belongs to the proteasome subunit S3 family. Component of the 19S proteasome regulatory particle complex. The 26S proteasome consists of a 20S core particle (CP) and two 19S regulatory subunits (RP). The regulatory particle is made of a lid composed of 9 subunits including PSMD3, a base containing 6 ATPases and few additional components. Interacts with UBQLN1 (via ubiquitin-like domain). Interacts with ERCC6.

Functionally, component of the 26S proteasome, a multiprotein complex involved in the ATP-dependent degradation of ubiquitinated proteins. This complex plays a key role in the maintenance of protein homeostasis by removing misfolded or damaged proteins, which could impair cellular functions, and by removing proteins whose functions are no longer required. Therefore, the proteasome participates in numerous cellular processes, including cell cycle progression, apoptosis, or DNA damage repair. The sequence is that of 26S proteasome non-ATPase regulatory subunit 3 (PSMD3) from Homo sapiens (Human).